A 238-amino-acid polypeptide reads, in one-letter code: Ribonuclease PH (238 aa).

Phosphate is bound by residues Arg-86 and 124-126 (GTR).

It belongs to the RNase PH family. In terms of assembly, homohexameric ring arranged as a trimer of dimers.

It carries out the reaction tRNA(n+1) + phosphate = tRNA(n) + a ribonucleoside 5'-diphosphate. Its function is as follows. Phosphorolytic 3'-5' exoribonuclease that plays an important role in tRNA 3'-end maturation. Removes nucleotide residues following the 3'-CCA terminus of tRNAs; can also add nucleotides to the ends of RNA molecules by using nucleoside diphosphates as substrates, but this may not be physiologically important. Probably plays a role in initiation of 16S rRNA degradation (leading to ribosome degradation) during starvation. The protein is Ribonuclease PH of Brucella melitensis biotype 2 (strain ATCC 23457).